We begin with the raw amino-acid sequence, 377 residues long: 8-amino-7-oxononanoate synthase (377 aa).

Arg13 contributes to the substrate binding site. 100–101 (GY) contributes to the pyridoxal 5'-phosphate binding site. Residue His125 coordinates substrate. Ser171, His199, and Thr228 together coordinate pyridoxal 5'-phosphate. Lys231 bears the N6-(pyridoxal phosphate)lysine mark. Thr345 provides a ligand contact to substrate.

It belongs to the class-II pyridoxal-phosphate-dependent aminotransferase family. BioF subfamily. In terms of assembly, homodimer. Pyridoxal 5'-phosphate is required as a cofactor.

The catalysed reaction is 6-carboxyhexanoyl-[ACP] + L-alanine + H(+) = (8S)-8-amino-7-oxononanoate + holo-[ACP] + CO2. It participates in cofactor biosynthesis; biotin biosynthesis. Catalyzes the decarboxylative condensation of pimeloyl-[acyl-carrier protein] and L-alanine to produce 8-amino-7-oxononanoate (AON), [acyl-carrier protein], and carbon dioxide. The polypeptide is 8-amino-7-oxononanoate synthase (Nitrosococcus oceani (strain ATCC 19707 / BCRC 17464 / JCM 30415 / NCIMB 11848 / C-107)).